The primary structure comprises 339 residues: Transmembrane protein 120B (339 aa).

Residues 1 to 77 adopt a coiled-coil conformation; the sequence is MSGQLERCER…ASREEAELVQ (77 aa). 6 consecutive transmembrane segments (helical) span residues 102–124, 132–152, 159–179, 187–207, 270–290, and 302–322; these read GLYL…AKFA, FKLY…FVLH, VFNF…SILI, GWWV…LTWP, FLLP…VTLF, and QVFV…LTTL.

The protein belongs to the TMEM120 family. As to quaternary structure, heterooligomer with TMEM120A.

The protein localises to the nucleus inner membrane. Its function is as follows. Necessary for efficient adipogenesis. Does not show ion channel activity. The polypeptide is Transmembrane protein 120B (Homo sapiens (Human)).